A 102-amino-acid polypeptide reads, in one-letter code: Large ribosomal subunit protein mL63 (102 aa).

This sequence belongs to the mitochondrion-specific ribosomal protein mL63 family.

It is found in the mitochondrion. The sequence is that of Large ribosomal subunit protein mL63 (Mrpl57) from Mus musculus (Mouse).